An 857-amino-acid chain; its full sequence is Putative serine/threonine-protein kinase receptor (857 aa).

Residues 1–32 (MKGARNIYHHSYMSFLLVFVVMILIHPALSIY) form the signal peptide. Over 33–446 (INTLSSTESL…IAKKRNASGK (414 aa)) the chain is Extracellular. The Bulb-type lectin domain occupies 35 to 155 (TLSSTESLTI…SNNDASEYLW (121 aa)). N-linked (GlcNAc...) asparagine glycans are attached at residues Asn-47, Asn-120, Asn-196, Asn-260, Asn-389, and Asn-442. Positions 350 to 433 (CSGDGFTRMK…DGQDLYVRLA (84 aa)) constitute a PAN domain. 2 disulfide bridges follow: Cys-380-Cys-405 and Cys-388-Cys-390. A helical membrane pass occupies residues 447 to 466 (IISLTVGVSVLLLLIMFCLW). Over 467–857 (KRKQKRAKAS…QYTCSVIDAR (391 aa)) the chain is Cytoplasmic. A Protein kinase domain is found at 528-779 (FSSCNKLGQG…PSIFQPQEVL (252 aa)). ATP is bound by residues 534–542 (LGQGGFGIV) and Lys-556. The active-site Proton acceptor is Asp-653.

The protein belongs to the protein kinase superfamily. Ser/Thr protein kinase family. In terms of tissue distribution, predominantly in the pistil and anther.

Its subcellular location is the membrane. The enzyme catalyses L-seryl-[protein] + ATP = O-phospho-L-seryl-[protein] + ADP + H(+). It carries out the reaction L-threonyl-[protein] + ATP = O-phospho-L-threonyl-[protein] + ADP + H(+). In terms of biological role, involved in sporophytic self-incompatibility system (the inability of flowering plants to achieve self-fertilization), probably acting in combination with S-locus-specific glycoproteins. Interaction with a ligand in the extracellular domain triggers the protein kinase activity of the cytoplasmic domain. The polypeptide is Putative serine/threonine-protein kinase receptor (SRK6) (Brassica oleracea var. viridis (Flowering kale)).